Reading from the N-terminus, the 757-residue chain is Cartilage oligomeric matrix protein (757 aa).

The signal sequence occupies residues 1–20 (MVPDTACVLLLTLAALGASG). Residues 22–86 (GQSPLGSDLG…SVRTGLPSVR (65 aa)) are COMP N-terminal. An EGF-like 1 domain is found at 87–126 (PLLHCAPGFCFPGVACIQTESGARCGPCPAGFTGNGSHCT). Cystine bridges form between cysteine 91–cysteine 102, cysteine 96–cysteine 111, cysteine 114–cysteine 125, cysteine 131–cysteine 142, cysteine 136–cysteine 151, cysteine 154–cysteine 178, cysteine 184–cysteine 197, cysteine 191–cysteine 206, cysteine 209–cysteine 221, cysteine 229–cysteine 243, cysteine 237–cysteine 253, cysteine 255–cysteine 266, cysteine 282–cysteine 287, cysteine 292–cysteine 312, cysteine 328–cysteine 348, cysteine 351–cysteine 371, cysteine 387–cysteine 407, cysteine 410–cysteine 430, cysteine 448–cysteine 468, cysteine 484–cysteine 504, and cysteine 520–cysteine 741. N-linked (GlcNAc...) asparagine glycosylation is present at asparagine 121. Positions 127–179 (DVNECNAHPCFPRVRCINTSPGFRCEACPPGYSGPTHQGVGLAFAKANKQVCT) constitute an EGF-like 2; calcium-binding domain. The EGF-like 3; calcium-binding domain occupies 180-222 (DINECETGQHNCVPNSVCINTRGSFQCGPCQPGFVGDQASGCQ). The 43-residue stretch at 225-267 (AQRFCPDGSPSECHEHADCVLERDGSRSCVCAVGWAGNGILCG) folds into the EGF-like 4 domain. TSP type-3 repeat units lie at residues 268–300 (RDTD…NSGQ), 301–336 (EDVD…NPDQ), 337–359 (RNTD…NDDQ), 360–395 (KDTD…NSDQ), 396–418 (KDSD…NPDQ), 419–456 (ADVD…NSAQ), 457–492 (EDSD…NPGQ), and 493–528 (EDAD…EVTL). The tract at residues 298-503 (SGQEDVDRDG…DADRDGVGDV (206 aa)) is disordered. Basic and acidic residues-rich tracts occupy residues 334–346 (PDQR…KWGD) and 352–370 (RSQK…RGDA). Residues 367 to 369 (RGD) carry the Cell attachment site motif. Over residues 467-476 (ACDDDDDNDG) the composition is skewed to acidic residues. The segment at 527 to 757 (TLTDFRAFQT…DYETHQLRQA (231 aa)) is mediates cell survival and induction of the IAP family of survival proteins. The TSP C-terminal domain occupies 532–746 (RAFQTVVLDP…LRYRCNDTIP (215 aa)). Asparagine 742 carries an N-linked (GlcNAc...) asparagine glycan.

It belongs to the thrombospondin family. As to quaternary structure, pentamer; disulfide-linked. Exists in a more compact conformation in the presence of calcium and shows a more extended conformation in the absence of calcium. Interacts with ITGB3, ITGA5 and FN1. Binding to FN1 requires the presence of divalent cations (Ca(2+), Mg(2+) or Mn(2+)). The greatest amount of binding is seen in the presence of Mn(2+). Interacts with MATN1, MATN3, MATN4 and ACAN. Binds heparin, heparan sulfate and chondroitin sulfate. EDTA dimishes significantly its binding to ACAN and abolishes its binding to MATN3, MATN4 and chondroitin sulfate. Interacts with collagen I, II and IX, and interaction with these collagens is dependent on the presence of zinc ions. Interacts with ADAMTS12. Interacts with ITGA7. Ca(2+) serves as cofactor. In terms of processing, proteolytically cleaved by metalloproteases ADAMTS4 and ADAMTS1 with ADAMTS4 showing more potent activity. In terms of tissue distribution, abundantly expressed in the chondrocyte extracellular matrix, and is also found in bone, tendon, ligament and synovium and blood vessels. Increased amounts are produced during late stages of osteoarthritis in the area adjacent to the main defect.

It is found in the secreted. Its subcellular location is the extracellular space. The protein localises to the extracellular matrix. Plays a role in the structural integrity of cartilage via its interaction with other extracellular matrix proteins such as the collagens and fibronectin. Can mediate the interaction of chondrocytes with the cartilage extracellular matrix through interaction with cell surface integrin receptors. Could play a role in the pathogenesis of osteoarthritis. Potent suppressor of apoptosis in both primary chondrocytes and transformed cells. Suppresses apoptosis by blocking the activation of caspase-3 and by inducing the IAP family of survival proteins (BIRC3, BIRC2, BIRC5 and XIAP). Essential for maintaining a vascular smooth muscle cells (VSMCs) contractile/differentiated phenotype under physiological and pathological stimuli. Maintains this phenotype of VSMCs by interacting with ITGA7. The sequence is that of Cartilage oligomeric matrix protein from Homo sapiens (Human).